A 505-amino-acid polypeptide reads, in one-letter code: Enhancer of mRNA-decapping protein 3 (505 aa).

In terms of domain architecture, Sm spans 1–68 (MAADWLGSIV…ISELKILEIP (68 aa)). The required for P-body targeting and interaction with DCP1A stretch occupies residues 1–79 (MAADWLGSIV…ESLKYTSDQL (79 aa)). Disordered regions lie at residues 84–181 (TGFG…QLKA) and 219–243 (THERRGGGGTRSRGTPNERPPTYRH). Composition is skewed to polar residues over residues 91–113 (TRQQNGTGKQKQTVAHNSAQNIP), 122–132 (EPSSTSPQPCS), and 155–177 (SLGSSSSRYPNQVTPKKSGTKNG). The segment at 186-293 (CFGDELEEIP…HKKLLCVAEK (108 aa)) is required for interaction with DDX6. In terms of domain architecture, DFDF spans 187-223 (FGDELEEIPDTDFDFEGNLALFDKAAVFEEIDTHERR). A YjeF N-terminal domain is found at 280–484 (SYVLHKKLLC…DIGIPQKVFR (205 aa)).

Belongs to the EDC3 family.

The protein resides in the cytoplasm. The protein localises to the P-body. Its function is as follows. Binds single-stranded RNA. Involved in the process of mRNA degradation and in the positive regulation of mRNA decapping. This chain is Enhancer of mRNA-decapping protein 3 (edc3), found in Xenopus laevis (African clawed frog).